Consider the following 419-residue polypeptide: Ribosomal RNA large subunit methyltransferase G (419 aa).

A compositionally biased stretch (basic and acidic residues) spans 386–408 (KAEPFETHPTEAEAKVEVTESKP). A disordered region spans residues 386–419 (KAEPFETHPTEAEAKVEVTESKPHPQSSLYGTKK). Polar residues predominate over residues 409–419 (HPQSSLYGTKK).

This sequence belongs to the methyltransferase superfamily. RlmG family.

It localises to the cytoplasm. The catalysed reaction is guanosine(1835) in 23S rRNA + S-adenosyl-L-methionine = N(2)-methylguanosine(1835) in 23S rRNA + S-adenosyl-L-homocysteine + H(+). Specifically methylates the guanine in position 1835 (m2G1835) of 23S rRNA. The chain is Ribosomal RNA large subunit methyltransferase G from Shewanella woodyi (strain ATCC 51908 / MS32).